A 374-amino-acid chain; its full sequence is Guanine nucleotide-binding protein subunit alpha-15 (374 aa).

Residues Gly41–Leu374 form the G-alpha domain. A G1 motif region spans residues Lys44–Thr57. Residues Gly49–Ser56, Leu183–Thr189, Asp208–Gln212, Asn277–Asp280, and Ala346 contribute to the GTP site. Residues Ser56 and Thr189 each contribute to the Mg(2+) site. Residues Asp181 to Thr189 form a G2 motif region. The tract at residues Leu204–Lys213 is G3 motif. Positions Ile273 to Asp280 are G4 motif. The G5 motif stretch occupies residues Thr344 to Thr349.

It belongs to the G-alpha family. G(q) subfamily. In terms of assembly, g proteins are composed of 3 units; alpha, beta and gamma. The alpha chain contains the guanine nucleotide binding site.

In terms of biological role, guanine nucleotide-binding proteins (G proteins) are involved as modulators or transducers in various transmembrane signaling systems. The polypeptide is Guanine nucleotide-binding protein subunit alpha-15 (Gna15) (Rattus norvegicus (Rat)).